The chain runs to 419 residues: Multifunctional CCA protein (419 aa).

ATP is bound by residues G8 and R11. G8 and R11 together coordinate CTP. Mg(2+) contacts are provided by D21 and D23. ATP is bound by residues R91, R137, and R140. CTP-binding residues include R91, R137, and R140. One can recognise an HD domain in the interval 226–327 (TGVHLMMVLD…VRLFDRCDAW (102 aa)).

This sequence belongs to the tRNA nucleotidyltransferase/poly(A) polymerase family. Bacterial CCA-adding enzyme type 1 subfamily. As to quaternary structure, monomer. Can also form homodimers and oligomers. The cofactor is Mg(2+). Ni(2+) is required as a cofactor.

It carries out the reaction a tRNA precursor + 2 CTP + ATP = a tRNA with a 3' CCA end + 3 diphosphate. It catalyses the reaction a tRNA with a 3' CCA end + 2 CTP + ATP = a tRNA with a 3' CCACCA end + 3 diphosphate. Its function is as follows. Catalyzes the addition and repair of the essential 3'-terminal CCA sequence in tRNAs without using a nucleic acid template. Adds these three nucleotides in the order of C, C, and A to the tRNA nucleotide-73, using CTP and ATP as substrates and producing inorganic pyrophosphate. tRNA 3'-terminal CCA addition is required both for tRNA processing and repair. Also involved in tRNA surveillance by mediating tandem CCA addition to generate a CCACCA at the 3' terminus of unstable tRNAs. While stable tRNAs receive only 3'-terminal CCA, unstable tRNAs are marked with CCACCA and rapidly degraded. The chain is Multifunctional CCA protein from Leptothrix cholodnii (strain ATCC 51168 / LMG 8142 / SP-6) (Leptothrix discophora (strain SP-6)).